The following is a 236-amino-acid chain: Biosynthetic peptidoglycan transglycosylase (236 aa).

A helical membrane pass occupies residues 12–31; it reads ALLWFAAGSALVVLVLRWVP.

It belongs to the glycosyltransferase 51 family.

The protein resides in the cell inner membrane. The enzyme catalyses [GlcNAc-(1-&gt;4)-Mur2Ac(oyl-L-Ala-gamma-D-Glu-L-Lys-D-Ala-D-Ala)](n)-di-trans,octa-cis-undecaprenyl diphosphate + beta-D-GlcNAc-(1-&gt;4)-Mur2Ac(oyl-L-Ala-gamma-D-Glu-L-Lys-D-Ala-D-Ala)-di-trans,octa-cis-undecaprenyl diphosphate = [GlcNAc-(1-&gt;4)-Mur2Ac(oyl-L-Ala-gamma-D-Glu-L-Lys-D-Ala-D-Ala)](n+1)-di-trans,octa-cis-undecaprenyl diphosphate + di-trans,octa-cis-undecaprenyl diphosphate + H(+). Its pathway is cell wall biogenesis; peptidoglycan biosynthesis. In terms of biological role, peptidoglycan polymerase that catalyzes glycan chain elongation from lipid-linked precursors. This Pseudomonas syringae pv. tomato (strain ATCC BAA-871 / DC3000) protein is Biosynthetic peptidoglycan transglycosylase.